A 284-amino-acid polypeptide reads, in one-letter code: 4-hydroxybenzoate octaprenyltransferase (284 aa).

7 helical membrane-spanning segments follow: residues 33 to 53, 93 to 113, 136 to 156, 159 to 179, 209 to 229, 231 to 248, and 264 to 284; these read VIAA…LGVF, IGLF…MNPL, YLPQ…AWAA, GELP…TIAY, LVIG…GQHY, LGQS…LFVY, and AFLN…IAFW.

This sequence belongs to the UbiA prenyltransferase family. It depends on Mg(2+) as a cofactor.

The protein localises to the cell inner membrane. The enzyme catalyses all-trans-octaprenyl diphosphate + 4-hydroxybenzoate = 4-hydroxy-3-(all-trans-octaprenyl)benzoate + diphosphate. It functions in the pathway cofactor biosynthesis; ubiquinone biosynthesis. Its function is as follows. Catalyzes the prenylation of para-hydroxybenzoate (PHB) with an all-trans polyprenyl group. Mediates the second step in the final reaction sequence of ubiquinone-8 (UQ-8) biosynthesis, which is the condensation of the polyisoprenoid side chain with PHB, generating the first membrane-bound Q intermediate 3-octaprenyl-4-hydroxybenzoate. The sequence is that of 4-hydroxybenzoate octaprenyltransferase from Vibrio campbellii (strain ATCC BAA-1116).